Here is a 327-residue protein sequence, read N- to C-terminus: Tetraacyldisaccharide 4'-kinase (327 aa).

Thr52–Thr59 contacts ATP.

The protein belongs to the LpxK family.

The catalysed reaction is a lipid A disaccharide + ATP = a lipid IVA + ADP + H(+). It functions in the pathway glycolipid biosynthesis; lipid IV(A) biosynthesis; lipid IV(A) from (3R)-3-hydroxytetradecanoyl-[acyl-carrier-protein] and UDP-N-acetyl-alpha-D-glucosamine: step 6/6. In terms of biological role, transfers the gamma-phosphate of ATP to the 4'-position of a tetraacyldisaccharide 1-phosphate intermediate (termed DS-1-P) to form tetraacyldisaccharide 1,4'-bis-phosphate (lipid IVA). This chain is Tetraacyldisaccharide 4'-kinase, found in Methylorubrum extorquens (strain CM4 / NCIMB 13688) (Methylobacterium extorquens).